The chain runs to 130 residues: Small ribosomal subunit protein uS11c (130 aa).

The protein belongs to the universal ribosomal protein uS11 family. As to quaternary structure, part of the 30S ribosomal subunit.

The protein resides in the plastid. It is found in the chloroplast. This Stigeoclonium helveticum (Green alga) protein is Small ribosomal subunit protein uS11c.